We begin with the raw amino-acid sequence, 410 residues long: D-amino acid dehydrogenase (410 aa).

9–14 (GGGIVG) lines the FAD pocket.

Belongs to the DadA oxidoreductase family. FAD serves as cofactor.

It localises to the cell inner membrane. The catalysed reaction is a D-alpha-amino acid + a quinone + H2O = a 2-oxocarboxylate + a quinol + NH4(+). Activity is markedly inhibited by benzoate, and moderately by SH reagents such as p-hydroxymercuribenzoate, iodoacetamide, and iodoacetate. Functionally, catalyzes the oxidative deamination of D-amino acids. Has broad substrate specificity; is mostly active on D-proline, and to a lesser extent, on several other D-amino acids such as D-alanine, D-phenylalanine and D-serine. Mediates electron transport from D-proline to coenzyme Q1 in vitro, and is involved in the electron transport chain from D-proline to the c-type cytochrome in vivo. In Helicobacter pylori (Campylobacter pylori), this protein is D-amino acid dehydrogenase.